A 365-amino-acid polypeptide reads, in one-letter code: Phospho-N-acetylmuramoyl-pentapeptide-transferase (365 aa).

A run of 10 helical transmembrane segments spans residues 29 to 49 (VGGLFFSLFISIVIGNRIIVW), 73 to 93 (GTPTMGGIIILISVVTSVIIW), 97 to 117 (SNIYIWYILFIFVMYGILGLV), 133 to 153 (ILNKYLWQSIIAWILIVIMFI), 171 to 191 (IVCKLKIWDMILAYFVIVGTS), 202 to 222 (GLVIVPVILVVSGLAIVTWVV), 242 to 262 (LVVVCASIIGAGLGFLWFNSY), 266 to 286 (IFMGDVGSLSLGGVIGLVSIL), 291 to 311 (YLLLIMGGIFVIESLSVIFQV), and 341 to 361 (IVVRFWIVSSILVLLSIVIFI).

It belongs to the glycosyltransferase 4 family. MraY subfamily. Mg(2+) is required as a cofactor.

Its subcellular location is the cell inner membrane. The enzyme catalyses UDP-N-acetyl-alpha-D-muramoyl-L-alanyl-gamma-D-glutamyl-meso-2,6-diaminopimeloyl-D-alanyl-D-alanine + di-trans,octa-cis-undecaprenyl phosphate = di-trans,octa-cis-undecaprenyl diphospho-N-acetyl-alpha-D-muramoyl-L-alanyl-D-glutamyl-meso-2,6-diaminopimeloyl-D-alanyl-D-alanine + UMP. It participates in cell wall biogenesis; peptidoglycan biosynthesis. Catalyzes the initial step of the lipid cycle reactions in the biosynthesis of the cell wall peptidoglycan: transfers peptidoglycan precursor phospho-MurNAc-pentapeptide from UDP-MurNAc-pentapeptide onto the lipid carrier undecaprenyl phosphate, yielding undecaprenyl-pyrophosphoryl-MurNAc-pentapeptide, known as lipid I. This is Phospho-N-acetylmuramoyl-pentapeptide-transferase from Blochmanniella floridana.